The following is a 2569-amino-acid chain: Highly reducing polyketide synthase pks5 (2569 aa).

The disordered stretch occupies residues 1 to 25 (MVVKFANGVRNRGNGDEGQRGTQRP). In terms of domain architecture, Ketosynthase family 3 (KS3) spans 27–452 (STPIAIVGMS…GTNVHVIMEA (426 aa)). Active-site for beta-ketoacyl synthase activity residues include C200, H335, and H375. The tract at residues 572-892 (IFNGQGAQWY…PYLSCLRRNI (321 aa)) is malonyl-CoA:ACP transacylase (MAT) domain. Residues 960–1097 (HELLGSSVPG…GYVSAEDSSK (138 aa)) are N-terminal hotdog fold. Positions 960-1268 (HELLGSSVPG…LRLQKIQAED (309 aa)) are dehydratase (DH) domain. Residues 960-1270 (HELLGSSVPG…LQKIQAEDDN (311 aa)) enclose the PKS/mFAS DH domain. H992 (proton acceptor; for dehydratase activity) is an active-site residue. The C-terminal hotdog fold stretch occupies residues 1117–1270 (RVRHVRPDAM…LQKIQAEDDN (154 aa)). D1179 functions as the Proton donor; for dehydratase activity in the catalytic mechanism. A methyltransferase (CMet) domain region spans residues 1457 to 1567 (LEVGAGTGGA…RKLLKPKGKL (111 aa)). Positions 1855 to 2170 (DLLNKIEFLE…SGTHMGKIVL (316 aa)) are enoyl reductase (ER) domain. Residues 2195–2371 (THLIVGGLRG…AISINLGPVD (177 aa)) form a ketoreductase (KR) domain region. The Carrier domain maps to 2485–2562 (AARKLVSELI…DFAALVASRS (78 aa)). The residue at position 2522 (S2522) is an O-(pantetheine 4'-phosphoryl)serine.

In terms of biological role, highly reducing polyketide synthase; part of the gene cluster that mediates the biosynthesis of abscisic acid (ABA), a phytohormone that acts antagonistically toward salicylic acid (SA), jasmonic acid (JA) and ethylene (ETH) signaling, to impede plant defense responses. The first step of the pathway catalyzes the reaction from farnesyl diphosphate to alpha-ionylideneethane performed by the alpha-ionylideneethane synthase abl3 via a three-step reaction mechanism involving 2 neutral intermediates, beta-farnesene and allofarnesene. The cytochrome P450 monooxygenase abl1 might then be involved in the conversion of alpha-ionylideneethane to alpha-ionylideneacetic acid. Alpha-ionylideneacetic acid is further converted to abscisic acid in 2 steps involving the cytochrome P450 monooxygenase abl2 and the short-chain dehydrogenase/reductase abl4, via the intermediates 1'-deoxy-ABA or 1',4'-trans-diol-ABA, depending on the order of action of these 2 enzymes. Abl2 is responsible for the hydroxylation of carbon atom C-1' and abl4 might be involved in the oxidation of the C-4' carbon atom. Pks5 is clearly not involved in the production of ABA. Nonetheless, the possibility cannot be excluded that pks5 may modify ABA into another compound. It also cannot be excluded the possibility that pks5 also has a function completely independent of ABA synthesis. Pks5 is not required for pathogenicity on B.napus cotyledon. The chain is Highly reducing polyketide synthase pks5 from Leptosphaeria maculans (strain JN3 / isolate v23.1.3 / race Av1-4-5-6-7-8) (Blackleg fungus).